The chain runs to 393 residues: S-adenosylmethionine synthase 4 (393 aa).

Residue E9 coordinates Mg(2+). H15 lines the ATP pocket. E43 lines the K(+) pocket. The L-methionine site is built by E56 and Q99. ATP contacts are provided by residues 167–169 (DGK), 235–238 (SGRF), D246, 252–253 (RK), A269, K273, and K277. D246 contacts L-methionine. K277 is a binding site for L-methionine.

It belongs to the AdoMet synthase family. Homotetramer. It depends on Mn(2+) as a cofactor. Requires Mg(2+) as cofactor. Co(2+) is required as a cofactor. K(+) serves as cofactor. Detected in trichomes (at the protein level).

The protein resides in the cytoplasm. It catalyses the reaction L-methionine + ATP + H2O = S-adenosyl-L-methionine + phosphate + diphosphate. The protein operates within amino-acid biosynthesis; S-adenosyl-L-methionine biosynthesis; S-adenosyl-L-methionine from L-methionine: step 1/1. Its function is as follows. Catalyzes the formation of S-adenosylmethionine from methionine and ATP. The reaction comprises two steps that are both catalyzed by the same enzyme: formation of S-adenosylmethionine (AdoMet) and triphosphate, and subsequent hydrolysis of the triphosphate. The chain is S-adenosylmethionine synthase 4 (METK4) from Arabidopsis thaliana (Mouse-ear cress).